Reading from the N-terminus, the 70-residue chain is Large ribosomal subunit protein eL38 (70 aa).

Lysine 4 participates in a covalent cross-link: Glycyl lysine isopeptide (Lys-Gly) (interchain with G-Cter in SUMO2). Lysine 9 bears the N6-acetyllysine; alternate mark. Lysine 9 is covalently cross-linked (Glycyl lysine isopeptide (Lys-Gly) (interchain with G-Cter in SUMO2); alternate). N6-acetyllysine is present on lysine 67.

The protein belongs to the eukaryotic ribosomal protein eL38 family. Component of the large ribosomal subunit.

The protein localises to the cytoplasm. In terms of biological role, component of the large ribosomal subunit. The ribosome is a large ribonucleoprotein complex responsible for the synthesis of proteins in the cell. The protein is Large ribosomal subunit protein eL38 (Rpl38) of Mus musculus (Mouse).